Reading from the N-terminus, the 157-residue chain is Ribonuclease H (157 aa).

The 146-residue stretch at 1 to 146 (MPDLVAYTDG…ADELARAGMA (146 aa)) folds into the RNase H type-1 domain. Mg(2+) is bound by residues Asp-9, Glu-52, Asp-74, and Asp-138.

This sequence belongs to the RNase H family. Monomer. Requires Mg(2+) as cofactor.

The protein localises to the cytoplasm. The catalysed reaction is Endonucleolytic cleavage to 5'-phosphomonoester.. Functionally, endonuclease that specifically degrades the RNA of RNA-DNA hybrids. This chain is Ribonuclease H, found in Jannaschia sp. (strain CCS1).